The sequence spans 52 residues: Large ribosomal subunit protein bL33 (52 aa).

The protein belongs to the bacterial ribosomal protein bL33 family.

This is Large ribosomal subunit protein bL33 from Chlamydia trachomatis serovar L2 (strain ATCC VR-902B / DSM 19102 / 434/Bu).